Consider the following 162-residue polypeptide: Small ribosomal subunit protein bS16 (162 aa).

The interval 113-162 is disordered; it reads ADGGPTTEATKPKKKSPAKKAAKAAEPAPQPEQPDTPALGGEQAELTAES. Positions 124-134 are enriched in basic residues; it reads PKKKSPAKKAA.

It belongs to the bacterial ribosomal protein bS16 family.

This Mycobacterium tuberculosis (strain ATCC 25177 / H37Ra) protein is Small ribosomal subunit protein bS16.